Here is a 182-residue protein sequence, read N- to C-terminus: Adenylate kinase (182 aa).

ATP is bound at residue 12–17 (GAGKGT). Positions 32-61 (STGDLLRDEVSSGSVLGIKAAEIMNKGELV) are NMP. AMP is bound by residues threonine 33, arginine 38, 59–61 (ELV), 85–88 (GFPR), and glutamine 92. Residues 126-132 (ERGRQDD) form an LID region. Position 127 (arginine 127) interacts with ATP. The AMP site is built by arginine 129 and arginine 140. Alanine 168 provides a ligand contact to ATP.

Belongs to the adenylate kinase family. Monomer.

The protein localises to the cytoplasm. The enzyme catalyses AMP + ATP = 2 ADP. It participates in purine metabolism; AMP biosynthesis via salvage pathway; AMP from ADP: step 1/1. Catalyzes the reversible transfer of the terminal phosphate group between ATP and AMP. Plays an important role in cellular energy homeostasis and in adenine nucleotide metabolism. This Prochlorococcus marinus (strain NATL2A) protein is Adenylate kinase.